The following is a 377-amino-acid chain: DNA-directed RNA polymerase subunit alpha (377 aa).

An alpha N-terminal domain (alpha-NTD) region spans residues 1–259 (MSDSSHNLLY…KHFSVFEKMD (259 aa)). The interval 279–377 (ILHKLVLGIN…KIRSSKNTKG (99 aa)) is alpha C-terminal domain (alpha-CTD).

This sequence belongs to the RNA polymerase alpha chain family. As to quaternary structure, homodimer. The RNAP catalytic core consists of 2 alpha, 1 beta, 1 beta' and 1 omega subunit. When a sigma factor is associated with the core the holoenzyme is formed, which can initiate transcription.

The enzyme catalyses RNA(n) + a ribonucleoside 5'-triphosphate = RNA(n+1) + diphosphate. In terms of biological role, DNA-dependent RNA polymerase catalyzes the transcription of DNA into RNA using the four ribonucleoside triphosphates as substrates. In Chlamydia trachomatis serovar L2 (strain ATCC VR-902B / DSM 19102 / 434/Bu), this protein is DNA-directed RNA polymerase subunit alpha.